The following is a 498-amino-acid chain: Trehalose-6-phosphate synthase (498 aa).

Residue Arg28 participates in D-glucose 6-phosphate binding. 48 to 49 (GG) contributes to the UDP-alpha-D-glucose binding site. D-glucose 6-phosphate is bound by residues Tyr106 and Asp160. UDP-alpha-D-glucose contacts are provided by Arg302 and Lys307. Position 340 (Arg340) interacts with D-glucose 6-phosphate. 405–409 (LVAKE) lines the UDP-alpha-D-glucose pocket.

It belongs to the glycosyltransferase 20 family. As to quaternary structure, homotetramer.

The enzyme catalyses ADP-alpha-D-glucose + D-glucose 6-phosphate = alpha,alpha-trehalose 6-phosphate + ADP + H(+). It carries out the reaction CDP-alpha-D-glucose + D-glucose 6-phosphate = alpha,alpha-trehalose 6-phosphate + CDP + H(+). It catalyses the reaction GDP-alpha-D-glucose + D-glucose 6-phosphate = alpha,alpha-trehalose 6-phosphate + GDP + H(+). The catalysed reaction is TDP-alpha-D-glucose + D-glucose 6-phosphate = 5-methyl-UDP + alpha,alpha-trehalose 6-phosphate + H(+). The enzyme catalyses D-glucose 6-phosphate + UDP-alpha-D-glucose = alpha,alpha-trehalose 6-phosphate + UDP + H(+). The protein operates within glycan biosynthesis; trehalose biosynthesis. Functionally, probably involved in the osmoprotection via the biosynthesis of trehalose and in the production of glycogen and alpha-glucan via the TreS-Pep2 branch involved in the biosynthesis of maltose-1-phosphate (M1P). Catalyzes the transfer of glucose from UDP-glucose (UDP-Glc) to D-glucose 6-phosphate (Glc-6-P) to form trehalose-6-phosphate. Probably also able to use ADP-Glc, CDP-Glc, GDP-Glc and TDP-Glc as glucosyl donors. In Mycobacterium leprae (strain TN), this protein is Trehalose-6-phosphate synthase.